The chain runs to 30 residues: Diuretic hormone 2 (30 aa).

A Valine amide modification is found at V30.

This sequence belongs to the sauvagine/corticotropin-releasing factor/urotensin I family.

Its subcellular location is the secreted. Functionally, regulation of fluid secretion. The sequence is that of Diuretic hormone 2 from Manduca sexta (Tobacco hawkmoth).